The chain runs to 84 residues: Exodeoxyribonuclease 7 small subunit (84 aa).

It belongs to the XseB family. Heterooligomer composed of large and small subunits.

It localises to the cytoplasm. The catalysed reaction is Exonucleolytic cleavage in either 5'- to 3'- or 3'- to 5'-direction to yield nucleoside 5'-phosphates.. Its function is as follows. Bidirectionally degrades single-stranded DNA into large acid-insoluble oligonucleotides, which are then degraded further into small acid-soluble oligonucleotides. The polypeptide is Exodeoxyribonuclease 7 small subunit (Bartonella henselae (strain ATCC 49882 / DSM 28221 / CCUG 30454 / Houston 1) (Rochalimaea henselae)).